The primary structure comprises 179 residues: Large ribosomal subunit protein uL5 (179 aa).

The protein belongs to the universal ribosomal protein uL5 family. As to quaternary structure, part of the 50S ribosomal subunit; part of the 5S rRNA/L5/L18/L25 subcomplex. Contacts the 5S rRNA and the P site tRNA. Forms a bridge to the 30S subunit in the 70S ribosome.

Its function is as follows. This is one of the proteins that bind and probably mediate the attachment of the 5S RNA into the large ribosomal subunit, where it forms part of the central protuberance. In the 70S ribosome it contacts protein S13 of the 30S subunit (bridge B1b), connecting the 2 subunits; this bridge is implicated in subunit movement. Contacts the P site tRNA; the 5S rRNA and some of its associated proteins might help stabilize positioning of ribosome-bound tRNAs. In Prochlorococcus marinus (strain NATL2A), this protein is Large ribosomal subunit protein uL5.